A 159-amino-acid polypeptide reads, in one-letter code: Putative ribosomal RNA large subunit methyltransferase H (159 aa).

Residues Leu76, Gly108, and Leu127–Phe132 contribute to the S-adenosyl-L-methionine site.

The protein belongs to the RNA methyltransferase RlmH family.

It localises to the cytoplasm. The enzyme catalyses pseudouridine(1915) in 23S rRNA + S-adenosyl-L-methionine = N(3)-methylpseudouridine(1915) in 23S rRNA + S-adenosyl-L-homocysteine + H(+). Its function is as follows. Specifically methylates the pseudouridine at position 1915 (m3Psi1915) in 23S rRNA. The polypeptide is Putative ribosomal RNA large subunit methyltransferase H (Methanoregula boonei (strain DSM 21154 / JCM 14090 / 6A8)).